The sequence spans 84 residues: Cell division topological specificity factor (84 aa).

Belongs to the MinE family.

Prevents the cell division inhibition by proteins MinC and MinD at internal division sites while permitting inhibition at polar sites. This ensures cell division at the proper site by restricting the formation of a division septum at the midpoint of the long axis of the cell. This is Cell division topological specificity factor from Pseudomonas syringae pv. syringae (strain B728a).